Consider the following 236-residue polypeptide: Purine nucleoside phosphorylase DeoD-type (236 aa).

H4 contributes to the a purine D-ribonucleoside binding site. Phosphate contacts are provided by residues G20, R24, R43, and 87–90 (RVGT). Residues 179-181 (EME) and 203-204 (SD) contribute to the a purine D-ribonucleoside site. D204 functions as the Proton donor in the catalytic mechanism.

This sequence belongs to the PNP/UDP phosphorylase family. In terms of assembly, homohexamer; trimer of homodimers.

The catalysed reaction is a purine D-ribonucleoside + phosphate = a purine nucleobase + alpha-D-ribose 1-phosphate. The enzyme catalyses a purine 2'-deoxy-D-ribonucleoside + phosphate = a purine nucleobase + 2-deoxy-alpha-D-ribose 1-phosphate. In terms of biological role, catalyzes the reversible phosphorolytic breakdown of the N-glycosidic bond in the beta-(deoxy)ribonucleoside molecules, with the formation of the corresponding free purine bases and pentose-1-phosphate. The sequence is that of Purine nucleoside phosphorylase DeoD-type from Streptococcus pneumoniae (strain JJA).